The sequence spans 89 residues: Small ribosomal subunit protein bS20 (89 aa).

2 disordered regions span residues 1 to 25 (MANIKSAIKRAKTSEKRRAHNASMK) and 69 to 89 (KNAASRQKSRLAKKLNSIQAS). Residues 7–20 (AIKRAKTSEKRRAH) show a composition bias toward basic residues.

The protein belongs to the bacterial ribosomal protein bS20 family.

Binds directly to 16S ribosomal RNA. The protein is Small ribosomal subunit protein bS20 of Geobacillus thermodenitrificans (strain NG80-2).